Consider the following 90-residue polypeptide: Probable small nuclear ribonucleoprotein E (90 aa).

Positions 14–89 (VNLIFRYLQN…ITLIHAAAQE (76 aa)) constitute a Sm domain.

Belongs to the snRNP Sm proteins family. In terms of assembly, core component of the spliceosomal U1, U2, U4 and U5 small nuclear ribonucleoproteins (snRNPs), the building blocks of the spliceosome.

It localises to the nucleus. The protein localises to the cytoplasm. It is found in the cytosol. In terms of biological role, plays a role in pre-mRNA splicing as a core component of the spliceosomal U1, U2, U4 and U5 small nuclear ribonucleoproteins (snRNPs), the building blocks of the spliceosome. This Caenorhabditis briggsae protein is Probable small nuclear ribonucleoprotein E (snr-6).